Here is a 385-residue protein sequence, read N- to C-terminus: 8-amino-7-oxononanoate synthase (385 aa).

Residue Arg-21 participates in substrate binding. 108-109 (GF) is a pyridoxal 5'-phosphate binding site. His-133 provides a ligand contact to substrate. Pyridoxal 5'-phosphate contacts are provided by Ser-179, His-207, and Thr-233. Lys-236 is subject to N6-(pyridoxal phosphate)lysine. Thr-352 provides a ligand contact to substrate.

The protein belongs to the class-II pyridoxal-phosphate-dependent aminotransferase family. BioF subfamily. Homodimer. It depends on pyridoxal 5'-phosphate as a cofactor.

It carries out the reaction 6-carboxyhexanoyl-[ACP] + L-alanine + H(+) = (8S)-8-amino-7-oxononanoate + holo-[ACP] + CO2. It participates in cofactor biosynthesis; biotin biosynthesis. Its function is as follows. Catalyzes the decarboxylative condensation of pimeloyl-[acyl-carrier protein] and L-alanine to produce 8-amino-7-oxononanoate (AON), [acyl-carrier protein], and carbon dioxide. The protein is 8-amino-7-oxononanoate synthase of Salmonella paratyphi A (strain ATCC 9150 / SARB42).